Consider the following 628-residue polypeptide: MDFKYDVIVIGAGHAGCEAAAAAANLGSKTCLITMDMNKIGQMSCNPAVGGIAKGQIVREIDALGGQMGLVTDETAIQFRILNRSKGPAMWSPRAQCDRAKFIWSWREKLENTPNLHIWQDTVCELLVENGEVVGLVTLWGVTFKAKCIVLTAGTFLNGLMHVGRHQLPGGRMAEPASYQLTESIARHGIAYGRMKTGTPVRIDARSIHFDLMDTQDGECDFHKFSFMNTSTRHLKQLQCWTCYTNEEVHRILREGLPDSPLFNGQIQSIGPRYCPSIETKIVTFPDKEQHQLFLEPEGETTQELYLNGFSSSLPMDIQIAALKKVPAFKDIVIYRPGYAIEYDYFDPTQLKHSLESKIIKNLFFAGQVNGTTGYEEAGGQGLIAGINAHINCHGGEAFTLARDEAYIGVLIDDLVTKGVDEPYRMFTSRAEYRILLRMDDADMRLTERAYHLGLAREDRYQLMKTKKEALEQIVNFAKNYSMKPALINDALEKLGTTPLRQGCKLIEILNRPQITIENIAEHVPAFQRELEKATAADSDRKEEILEAAEILIKYQGYIDRERMIAEKLARLESIKIKGKFDYASIQSLSTEARQKLVKIDPETIAQASRIPGVSPSDINVLLVLSGR.

FAD is bound by residues 11–16 (GAGHAG), V123, and S178. Position 271–285 (271–285 (GPRYCPSIETKIVTF)) interacts with NAD(+). Q368 provides a ligand contact to FAD.

Belongs to the MnmG family. As to quaternary structure, homodimer. Heterotetramer of two MnmE and two MnmG subunits. It depends on FAD as a cofactor.

Its subcellular location is the cytoplasm. Its function is as follows. NAD-binding protein involved in the addition of a carboxymethylaminomethyl (cmnm) group at the wobble position (U34) of certain tRNAs, forming tRNA-cmnm(5)s(2)U34. The protein is tRNA uridine 5-carboxymethylaminomethyl modification enzyme MnmG of Bacteroides thetaiotaomicron (strain ATCC 29148 / DSM 2079 / JCM 5827 / CCUG 10774 / NCTC 10582 / VPI-5482 / E50).